We begin with the raw amino-acid sequence, 305 residues long: MSDFDRVRDYLTALQDRICNVVETIDGQSHFHEDHWQRTEGGGGRTRLLRDGAVFEQAAIGFSDVCGTHLPPSASVRRPELAGANWRACGVSLVFHPKNPFVPTTHLNVRYFRAEREGKQVAAWFGGGFDLTPFYPFDEDVVHWHRVARDLCAPFGDERYAAHKRWCDEYFVLRHRNETRGVGGLFFDDLDKDFERDFDYQRAVGDGFLDAYFPIVTRRHDTPYGDRERAFQLYRRGRYVEFNLLFDRGTLFGLQSGGRAESILISLPPLVRWEYGYHPLPGSAEARLADYLLPRDWLEESRICE.

Position 92 (serine 92) interacts with substrate. Positions 96 and 106 each coordinate a divalent metal cation. Catalysis depends on histidine 106, which acts as the Proton donor. 108–110 (NVR) provides a ligand contact to substrate. Residues histidine 145 and histidine 175 each coordinate a divalent metal cation. Residues 239–274 (YVEFNLLFDRGTLFGLQSGGRAESILISLPPLVRWE) are important for dimerization. 257–259 (GGR) is a substrate binding site.

It belongs to the aerobic coproporphyrinogen-III oxidase family. Homodimer. A divalent metal cation is required as a cofactor.

It is found in the cytoplasm. It carries out the reaction coproporphyrinogen III + O2 + 2 H(+) = protoporphyrinogen IX + 2 CO2 + 2 H2O. The protein operates within porphyrin-containing compound metabolism; protoporphyrin-IX biosynthesis; protoporphyrinogen-IX from coproporphyrinogen-III (O2 route): step 1/1. In terms of biological role, involved in the heme biosynthesis. Catalyzes the aerobic oxidative decarboxylation of propionate groups of rings A and B of coproporphyrinogen-III to yield the vinyl groups in protoporphyrinogen-IX. This Xylella fastidiosa (strain M12) protein is Oxygen-dependent coproporphyrinogen-III oxidase.